The sequence spans 175 residues: uncharacterized protein (175 aa).

Disordered regions lie at residues 68–112 and 153–175; these read NKNN…DQPY and PEKA…KLTT. Residues 94–105 show a composition bias toward low complexity; it reads DEQPMMPYQQPP.

It belongs to the asfivirus H171R family.

It localises to the virion. This is an uncharacterized protein from African swine fever virus (isolate Tick/Malawi/Lil 20-1/1983) (ASFV).